Here is a 372-residue protein sequence, read N- to C-terminus: Lysophosphatidic acid receptor 5 (372 aa).

Over Met-1–Leu-26 the chain is Extracellular. Residues Asn-4 and Asn-9 are each glycosylated (N-linked (GlcNAc...) asparagine). Residues Val-27 to Phe-47 traverse the membrane as a helical segment. Residues Leu-48–Ser-55 are Cytoplasmic-facing. A helical membrane pass occupies residues Val-56 to Pro-76. Over Val-77–Thr-96 the chain is Extracellular. A disulfide bridge links Cys-94 with Cys-175. The chain crosses the membrane as a helical span at residues Thr-97–Val-117. Topologically, residues Asp-118–Arg-136 are cytoplasmic. A helical membrane pass occupies residues Val-137–Ala-157. The Extracellular portion of the chain corresponds to Arg-158–Arg-187. A helical membrane pass occupies residues Leu-188–Val-208. The Cytoplasmic segment spans residues Tyr-209–Asn-239. A helical transmembrane segment spans residues Leu-240–Leu-260. Over Arg-261–Arg-276 the chain is Extracellular. A helical membrane pass occupies residues Gly-277–Tyr-297. Topologically, residues Tyr-298 to Leu-372 are cytoplasmic. Residues Gly-312–Leu-372 form a disordered region. Polar residues-rich tracts occupy residues Ser-332–Ala-341 and Ser-357–Leu-372.

The protein belongs to the G-protein coupled receptor 1 family. As to expression, not expressed in frontal cortex, basal forebrain, caudate putamen, thalamus, or hippocampus.

The protein resides in the cell membrane. In terms of biological role, receptor for lysophosphatidic acid (LPA), a mediator of diverse cellular activities. The sequence is that of Lysophosphatidic acid receptor 5 (LPAR5) from Homo sapiens (Human).